The primary structure comprises 594 residues: Actin-histidine N-methyltransferase (594 aa).

Residues 1 to 22 (MGKKSRVKTQKSGTGATATVSP) form a disordered region. The segment covering 10–20 (QKSGTGATATV) has biased composition (polar residues). S-adenosyl-L-methionine is bound by residues R75, 104-106 (EGF), R254, 275-279 (DMCNH), and 325-327 (SGF). The region spanning 94 to 314 (EGFEMVNFKE…AGEQIYIFYG (221 aa)) is the SET domain. Residue S513 is modified to Phosphoserine. Residues 549–594 (ENGLVNGENSIPNGTRSENESLNQESKRAVEDAKGSSSDSTAGVKE) form a disordered region. A compositionally biased stretch (polar residues) spans 555-572 (GENSIPNGTRSENESLNQ). The segment covering 573-582 (ESKRAVEDAK) has biased composition (basic and acidic residues). Polar residues predominate over residues 583–594 (GSSSDSTAGVKE).

The protein belongs to the class V-like SAM-binding methyltransferase superfamily. SETD3 actin-histidine methyltransferase family. Interacts with MYOD1. In terms of processing, phosphorylated by GSK3B, which is required for recognition by the SCF(FBXW7) complex and subsequent degradation. Ubiquitinated by the SCF(FBXW7) complex following phosphorylation by GSK3B, leading to its degradation by the proteasome.

Its subcellular location is the cytoplasm. The protein localises to the nucleus. The catalysed reaction is L-histidyl-[protein] + S-adenosyl-L-methionine = N(tele)-methyl-L-histidyl-[protein] + S-adenosyl-L-homocysteine + H(+). Its function is as follows. Protein-histidine N-methyltransferase that specifically mediates 3-methylhistidine (tele-methylhistidine) methylation of actin at 'His-73'. Histidine methylation of actin is required for smooth muscle contraction of the laboring uterus during delivery. Does not have protein-lysine N-methyltransferase activity and probably only catalyzes histidine methylation of actin. This chain is Actin-histidine N-methyltransferase, found in Homo sapiens (Human).